A 39-amino-acid polypeptide reads, in one-letter code: Sarcotoxin-1C (39 aa).

Arginine amide is present on arginine 39.

This sequence belongs to the cecropin family.

The protein resides in the secreted. Its function is as follows. Sarcotoxins, which are potent bactericidal proteins, are produced in response to injury. They are cytotoxic to both Gram-positive and Gram-negative bacteria. This Sarcophaga peregrina (Flesh fly) protein is Sarcotoxin-1C.